Consider the following 85-residue polypeptide: Phosphocarrier protein HPr (85 aa).

Positions 1–85 constitute an HPr domain; sequence MFQRDIKITT…DLAKFLTTLK (85 aa). Histidine 15 serves as the catalytic Pros-phosphohistidine intermediate.

The protein belongs to the HPr family.

It is found in the cytoplasm. Functionally, general (non sugar-specific) component of the phosphoenolpyruvate-dependent sugar phosphotransferase system (sugar PTS). This major carbohydrate active-transport system catalyzes the phosphorylation of incoming sugar substrates concomitantly with their translocation across the cell membrane. The phosphoryl group from phosphoenolpyruvate (PEP) is transferred to the phosphoryl carrier protein HPr by enzyme I. Phospho-HPr then transfers it to the PTS EIIA domain. This chain is Phosphocarrier protein HPr (ptsH), found in Buchnera aphidicola subsp. Baizongia pistaciae (strain Bp).